A 367-amino-acid chain; its full sequence is BTB/POZ domain-containing protein Tiwaz (367 aa).

Disordered stretches follow at residues 16–46 and 62–87; these read LTVD…PRDL and SSPT…SSVT. Over residues 28-45 the composition is skewed to basic and acidic residues; the sequence is CDMDRERERDVKALEPRD. The BTB domain maps to 135–205; the sequence is APVHIDVGGT…MRNSRLLIAE (71 aa). The segment at 240–261 is disordered; that stretch reads GNYLVAPPTPPARHIKTSPRTS.

Functionally, functions with the transcription factor TfAP-2 to regulate octopamine neuronal signaling pathways that control behaviors such as male aggression, male mating, and the initiation of feeding. Required for TfAP-2 transcriptional activity in octopaminergic neurons. Functions with TfAP-2 to regulate expression of genes which are involved in promoting octopamine production and secretion from octopaminergic neurons, such as Tbh and Vmat. Octopamine then modulates feeding and male aggression by regulating the expression of the satiation hormone Dsk in insulin-producing cells (IPCs). Functions with octopamine and Dsk as part of a negative feedback loop to prevent overeating; acts with TfAP-2 to regulate octopamine signaling pathways that initiate feeding, then octopamine activates expression of Dsk which inhibits consummatory behavior. May also be involved in negatively regulating nociception in larvae to prevent spontaneous pain and hyperalgesia. This Drosophila melanogaster (Fruit fly) protein is BTB/POZ domain-containing protein Tiwaz.